Here is a 276-residue protein sequence, read N- to C-terminus: DnaJ homolog subfamily C member 27-B (276 aa).

GTP contacts are provided by residues 23–30 (GNAEVGKS), 71–75 (DMAGH), and 137–140 (NKID). The region spanning 220–276 (DSWDMLGVKPGATRDEVNKAYRKLAVLLHPDKCVAPGSEDAFKAVVNARTALLKNIK) is the J domain.

The protein belongs to the small GTPase superfamily. Rab family.

The protein resides in the nucleus. In terms of biological role, GTPase possibly involved in regulation of the MEK/ERK pathway. The protein is DnaJ homolog subfamily C member 27-B (dnajc27-b) of Xenopus laevis (African clawed frog).